Consider the following 447-residue polypeptide: Alkylglycerol monooxygenase (447 aa).

Transmembrane regions (helical) follow at residues 43 to 63 and 111 to 131; these read ATPF…ILKG and WDST…YYWF. The Fatty acid hydroxylase domain occupies 119 to 249; sequence FTFLGVDFGY…LIIWDRIFGT (131 aa). Positions 132 to 136 match the Histidine box-1 motif; the sequence is HRMAH. The short motif at 145-149 is the Histidine box-2 element; it reads HQAHH. Residues 170 to 190 traverse the membrane as a helical segment; that stretch reads SWVFYCPLALFIPPSVFAVHI. The short motif at 221–225 is the Histidine box-3 element; it reads HRVHH. Transmembrane regions (helical) follow at residues 340 to 360, 363 to 383, and 413 to 433; these read VLQF…TAVL, VTLL…GFLL, and IPSL…FWGV.

This sequence belongs to the sterol desaturase family. TMEM195 subfamily. Fe cation is required as a cofactor. Highly expressed in lever and small intestine.

It localises to the endoplasmic reticulum membrane. It carries out the reaction 1-O-(1,2-saturated-alkyl)-sn-glycerol + (6R)-L-erythro-5,6,7,8-tetrahydrobiopterin + O2 = a 1-(1-hydroxyalkyl)-sn-glycerol + (6R)-L-erythro-6,7-dihydrobiopterin + H2O. Glyceryl-ether monooxygenase that cleaves the O-alkyl bond of ether lipids. Ether lipids are essential components of brain membranes. The protein is Alkylglycerol monooxygenase (Agmo) of Mus musculus (Mouse).